The sequence spans 634 residues: Nicotinic receptor-associated protein 1 (634 aa).

2 consecutive C2 domains span residues 1-141 (MNQP…KAHL) and 159-295 (KTGS…EILL). Leu-29, Asp-30, Asp-36, Asp-105, Asp-107, Asp-119, Asp-189, Asp-195, Asp-251, Asp-253, and Asp-271 together coordinate Ca(2+). In terms of domain architecture, VWFA spans 338–557 (DFAVAVDFTA…LDPDVIQENL (220 aa)). The segment at 576 to 603 (RGFQPRPVDDPWRRDSPPPEFDPILDGT) is disordered. Residues 582-592 (PVDDPWRRDSP) are compositionally biased toward basic and acidic residues.

This sequence belongs to the copine family. Interacts with nicotinic acetylcholine receptor. It depends on Ca(2+) as a cofactor. As to expression, expressed in head and tail neurons, ventral cord moto-neurons, body wall muscles and hypodermal cells of the vulva.

It is found in the cell membrane. Functionally, exhibits calcium-dependent phospholipid binding properties. May function in membrane trafficking. Regulates synaptic levels of nicotinic acetylcholine receptor subunit lev-1 and unc-38 in the nerve cord. Involved in nicotinic acetylcholine receptor (nAChR)-mediated sensitivity to nicotine and levamisole. Affects directional sperm motility. The chain is Nicotinic receptor-associated protein 1 (nra-1) from Caenorhabditis elegans.